Consider the following 229-residue polypeptide: MPKHCFLGLLIMLLTTATETQPAHVSLKPQKVQFQSRNFHNILHWQPGNSLTSNGSVYFVQYKTYGQGQWKDKNDCWGTTALFCDLTKETLDPYEPYYGRVMMAWAGSYSEWTRTPRFTPWWETKLDPPVVTITRVNASLRVRLRPPELPHRNQTGKNTSMENYYNLVYRVSIINNSLEKEQKAYEGTQRAVEIQGLTPHCSYCVVAEMYQPMFDRRSPRSKERCVQIP.

The N-terminal stretch at 1 to 19 (MPKHCFLGLLIMLLTTATE) is a signal peptide. Fibronectin type-III domains lie at 28–127 (KPQK…TKLD) and 128–229 (PPVV…VQIP). N-linked (GlcNAc...) asparagine glycosylation is present at N54. Disulfide bonds link C76–C84 and C204–C225.

The protein belongs to the type II cytokine receptor family.

It localises to the secreted. In terms of biological role, receptor for IL22. Binds to IL22, prevents interaction with the functional IL-22R complex and blocks the activity of IL22 (in vitro). May play an important role as an IL22 antagonist in the regulation of inflammatory responses. The protein is Interleukin-22 receptor subunit alpha-2 (Il22ra2) of Rattus norvegicus (Rat).